The chain runs to 396 residues: Pyridinium-3,5-bisthiocarboxylic acid mononucleotide nickel insertion protein (396 aa).

The protein belongs to the LarC family.

The enzyme catalyses Ni(II)-pyridinium-3,5-bisthiocarboxylate mononucleotide = pyridinium-3,5-bisthiocarboxylate mononucleotide + Ni(2+). Its function is as follows. Involved in the biosynthesis of a nickel-pincer cofactor ((SCS)Ni(II) pincer complex). Binds Ni(2+), and functions in nickel delivery to pyridinium-3,5-bisthiocarboxylic acid mononucleotide (P2TMN), to form the mature cofactor. Is thus probably required for the activation of nickel-pincer cofactor-dependent enzymes. The chain is Pyridinium-3,5-bisthiocarboxylic acid mononucleotide nickel insertion protein from Moorella thermoacetica (strain ATCC 39073 / JCM 9320).